A 540-amino-acid chain; its full sequence is NXPE family member 1 (540 aa).

An N-terminal signal peptide occupies residues 1–22; it reads MLHKYLKLICLLAAICVLCIIS. Residues Asn24, Asn42, Asn87, Asn155, Asn205, and Asn291 are each glycosylated (N-linked (GlcNAc...) asparagine).

It belongs to the NXPE family. In terms of tissue distribution, intestine, and to a lesser extent in kidney.

It localises to the secreted. The protein is NXPE family member 1 (NXPE1) of Oryctolagus cuniculus (Rabbit).